A 357-amino-acid chain; its full sequence is Dual-specificity RNA methyltransferase RlmN (357 aa).

The Proton acceptor role is filled by Glu-89. The Radical SAM core domain maps to Glu-109–Asp-340. The cysteines at positions 116 and 345 are disulfide-linked. [4Fe-4S] cluster is bound by residues Cys-123, Cys-127, and Cys-130. S-adenosyl-L-methionine-binding positions include Gly-173–Glu-174, Ser-203, Ser-226–His-228, and Asn-302. The active-site S-methylcysteine intermediate is Cys-345.

It belongs to the radical SAM superfamily. RlmN family. [4Fe-4S] cluster serves as cofactor.

The protein localises to the cytoplasm. It carries out the reaction adenosine(2503) in 23S rRNA + 2 reduced [2Fe-2S]-[ferredoxin] + 2 S-adenosyl-L-methionine = 2-methyladenosine(2503) in 23S rRNA + 5'-deoxyadenosine + L-methionine + 2 oxidized [2Fe-2S]-[ferredoxin] + S-adenosyl-L-homocysteine. The catalysed reaction is adenosine(37) in tRNA + 2 reduced [2Fe-2S]-[ferredoxin] + 2 S-adenosyl-L-methionine = 2-methyladenosine(37) in tRNA + 5'-deoxyadenosine + L-methionine + 2 oxidized [2Fe-2S]-[ferredoxin] + S-adenosyl-L-homocysteine. Functionally, specifically methylates position 2 of adenine 2503 in 23S rRNA and position 2 of adenine 37 in tRNAs. m2A2503 modification seems to play a crucial role in the proofreading step occurring at the peptidyl transferase center and thus would serve to optimize ribosomal fidelity. The sequence is that of Dual-specificity RNA methyltransferase RlmN from Helicobacter pylori (strain G27).